A 358-amino-acid polypeptide reads, in one-letter code: Protein-arginine kinase (358 aa).

The 228-residue stretch at Val23 to Ala250 folds into the Phosphagen kinase C-terminal domain. Residues Val26–Ser30, Lys174–Phe178, and Ser203–Gly208 contribute to the ATP site.

This sequence belongs to the ATP:guanido phosphotransferase family.

It catalyses the reaction L-arginyl-[protein] + ATP = N(omega)-phospho-L-arginyl-[protein] + ADP + H(+). Functionally, catalyzes the specific phosphorylation of arginine residues in proteins. This is Protein-arginine kinase from Chlamydia pneumoniae (Chlamydophila pneumoniae).